Here is a 272-residue protein sequence, read N- to C-terminus: Putative phosphoenolpyruvate synthase regulatory protein (272 aa).

152-159 is an ADP binding site; sequence GVSRCGKT.

The protein belongs to the pyruvate, phosphate/water dikinase regulatory protein family. PSRP subfamily.

The catalysed reaction is [pyruvate, water dikinase] + ADP = [pyruvate, water dikinase]-phosphate + AMP + H(+). It catalyses the reaction [pyruvate, water dikinase]-phosphate + phosphate + H(+) = [pyruvate, water dikinase] + diphosphate. In terms of biological role, bifunctional serine/threonine kinase and phosphorylase involved in the regulation of the phosphoenolpyruvate synthase (PEPS) by catalyzing its phosphorylation/dephosphorylation. The chain is Putative phosphoenolpyruvate synthase regulatory protein from Pseudomonas putida (strain ATCC 47054 / DSM 6125 / CFBP 8728 / NCIMB 11950 / KT2440).